A 347-amino-acid chain; its full sequence is Methylthioribose-1-phosphate isomerase (347 aa).

Residues 46–48, Arg-89, and Gln-196 contribute to the substrate site; that span reads RGA. Asp-237 (proton donor) is an active-site residue. Position 247–248 (247–248) interacts with substrate; that stretch reads NK.

This sequence belongs to the eIF-2B alpha/beta/delta subunits family. MtnA subfamily.

It catalyses the reaction 5-(methylsulfanyl)-alpha-D-ribose 1-phosphate = 5-(methylsulfanyl)-D-ribulose 1-phosphate. It functions in the pathway amino-acid biosynthesis; L-methionine biosynthesis via salvage pathway; L-methionine from S-methyl-5-thio-alpha-D-ribose 1-phosphate: step 1/6. Catalyzes the interconversion of methylthioribose-1-phosphate (MTR-1-P) into methylthioribulose-1-phosphate (MTRu-1-P). The polypeptide is Methylthioribose-1-phosphate isomerase (Chloroflexus aurantiacus (strain ATCC 29366 / DSM 635 / J-10-fl)).